Reading from the N-terminus, the 77-residue chain is Small ribosomal subunit protein bS21 (77 aa).

It belongs to the bacterial ribosomal protein bS21 family.

This chain is Small ribosomal subunit protein bS21, found in Bartonella tribocorum (strain CIP 105476 / IBS 506).